A 395-amino-acid polypeptide reads, in one-letter code: 1-deoxy-D-xylulose 5-phosphate reductoisomerase (395 aa).

Residues Thr10, Gly11, Ser12, Ile13, Ala36, and Asn123 each contribute to the NADPH site. Residue Lys124 participates in 1-deoxy-D-xylulose 5-phosphate binding. Position 125 (Glu125) interacts with NADPH. A Mn(2+)-binding site is contributed by Asp149. Residues Ser150, Glu151, Ser185, and His208 each contribute to the 1-deoxy-D-xylulose 5-phosphate site. Glu151 contacts Mn(2+). Gly214 contacts NADPH. 1-deoxy-D-xylulose 5-phosphate contacts are provided by Ser221, Asn226, Lys227, and Glu230. Position 230 (Glu230) interacts with Mn(2+).

This sequence belongs to the DXR family. It depends on Mg(2+) as a cofactor. Mn(2+) serves as cofactor.

The catalysed reaction is 2-C-methyl-D-erythritol 4-phosphate + NADP(+) = 1-deoxy-D-xylulose 5-phosphate + NADPH + H(+). Its pathway is isoprenoid biosynthesis; isopentenyl diphosphate biosynthesis via DXP pathway; isopentenyl diphosphate from 1-deoxy-D-xylulose 5-phosphate: step 1/6. Catalyzes the NADPH-dependent rearrangement and reduction of 1-deoxy-D-xylulose-5-phosphate (DXP) to 2-C-methyl-D-erythritol 4-phosphate (MEP). In Shewanella amazonensis (strain ATCC BAA-1098 / SB2B), this protein is 1-deoxy-D-xylulose 5-phosphate reductoisomerase.